A 610-amino-acid polypeptide reads, in one-letter code: UvrABC system protein C (610 aa).

Positions 16-94 (SQPGVYRMYD…IKLYQPRYNV (79 aa)) constitute a GIY-YIG domain. The region spanning 204-239 (DQVLTQLIARMEKASQDLAFEEAARIRDQIQAVRRV) is the UVR domain.

It belongs to the UvrC family. Interacts with UvrB in an incision complex.

The protein resides in the cytoplasm. Its function is as follows. The UvrABC repair system catalyzes the recognition and processing of DNA lesions. UvrC both incises the 5' and 3' sides of the lesion. The N-terminal half is responsible for the 3' incision and the C-terminal half is responsible for the 5' incision. The chain is UvrABC system protein C from Salmonella typhimurium (strain LT2 / SGSC1412 / ATCC 700720).